The chain runs to 205 residues: Basonuclin zinc finger protein homolog (205 aa).

2 consecutive C2H2-type zinc fingers follow at residues 107–130 (VACDICSKSFCDKGALKIHTSAVH) and 135–164 (HTCTVTGCGKQFSSRRSRNRHSSNNNPKLH). The segment at 145–168 (QFSSRRSRNRHSSNNNPKLHMPES) is disordered.

Expressed in the VA and VB motor neurons and at lower levels in the SABV neuron pair.

The protein localises to the nucleus. Functionally, probable transcription factor. Involved in motor neuron fate determination and maintenance, acting as a transcriptional repressor to counteract gene activation by transcription factor unc-3 in a subset of motor neurons. Required throughout development to repress transcription by unc-3, probably acting by binding to specific promoter elements. Represses expression of DA and DB motor neuron-specific effector genes, such as unc-129 and unc-53, in VA and VB motor neurons. The chain is Basonuclin zinc finger protein homolog from Caenorhabditis elegans.